Consider the following 294-residue polypeptide: Urease accessory protein UreD 1 (294 aa).

The disordered stretch occupies residues 1–20 (MALSLDDLPEKPAPAEPVSA).

This sequence belongs to the UreD family. In terms of assembly, ureD, UreF and UreG form a complex that acts as a GTP-hydrolysis-dependent molecular chaperone, activating the urease apoprotein by helping to assemble the nickel containing metallocenter of UreC. The UreE protein probably delivers the nickel.

The protein localises to the cytoplasm. Functionally, required for maturation of urease via the functional incorporation of the urease nickel metallocenter. In Methylorubrum populi (strain ATCC BAA-705 / NCIMB 13946 / BJ001) (Methylobacterium populi), this protein is Urease accessory protein UreD 1.